Here is a 407-residue protein sequence, read N- to C-terminus: L-cysteine:1D-myo-inositol 2-amino-2-deoxy-alpha-D-glucopyranoside ligase (407 aa).

Cys43 contacts Zn(2+). L-cysteinyl-5'-AMP-binding positions include 43 to 46 (CGIT), Thr58, and 81 to 83 (NAT). The short motif at 45–55 (ITPYDATHLGH) is the 'HIGH' region element. The short motif at 183–188 (QRGGDP) is the 'ERGGDP' region element. Trp223 contributes to the L-cysteinyl-5'-AMP binding site. Cys227 lines the Zn(2+) pocket. 245-247 (GSD) is a binding site for L-cysteinyl-5'-AMP. Zn(2+) is bound at residue His252. Val279 serves as a coordination point for L-cysteinyl-5'-AMP. The short motif at 285–289 (KMSKS) is the 'KMSKS' region element.

Belongs to the class-I aminoacyl-tRNA synthetase family. MshC subfamily. As to quaternary structure, monomer. Zn(2+) serves as cofactor.

The catalysed reaction is 1D-myo-inositol 2-amino-2-deoxy-alpha-D-glucopyranoside + L-cysteine + ATP = 1D-myo-inositol 2-(L-cysteinylamino)-2-deoxy-alpha-D-glucopyranoside + AMP + diphosphate + H(+). Functionally, catalyzes the ATP-dependent condensation of GlcN-Ins and L-cysteine to form L-Cys-GlcN-Ins. This Streptosporangium roseum (strain ATCC 12428 / DSM 43021 / JCM 3005 / KCTC 9067 / NCIMB 10171 / NRRL 2505 / NI 9100) protein is L-cysteine:1D-myo-inositol 2-amino-2-deoxy-alpha-D-glucopyranoside ligase.